The following is a 380-amino-acid chain: MPRSQDPVMRTRRFLEHLTRKYYERARVKLPGDFSLREFALQTWTGKSYLRHLSFASTEAVHRLLVEKAPRHFYYSSARYDQPGADDMDAKGWRSADLTFDIDADHLPECSGSIVEVDGGIEGKTSFIEEALCMRAAALRAQILYDILVYELGFDKSRIAIEFSGHRGFHVTVYLDDFDDYAKAGSDVRREIVNYVKALGLRADVLEPWTMLQVRRGKPIPIPPNVQLAGARGRVARIIRRLALRDGAIDIVKAVEGPSTTYSEELREYEDKARQLIGVEIDEQVSVDVKRLIRVPYSINGKTGLLVKPVTVDELDEFVVDETLSPFAREPPVRIRVVTSLPSSVTILGNRLKLREGDSPRLPAPVAVYLMAKGVAVLAQ.

Active-site residues include D101, D103, and D282.

Belongs to the eukaryotic-type primase small subunit family. Heterodimer of a small subunit (PriS) and a large subunit (PriL). The cofactor is Mg(2+). Mn(2+) is required as a cofactor.

Functionally, catalytic subunit of DNA primase, an RNA polymerase that catalyzes the synthesis of short RNA molecules used as primers for DNA polymerase during DNA replication. The small subunit contains the primase catalytic core and has DNA synthesis activity on its own. Binding to the large subunit stabilizes and modulates the activity, increasing the rate of DNA synthesis while decreasing the length of the DNA fragments, and conferring RNA synthesis capability. The DNA polymerase activity may enable DNA primase to also catalyze primer extension after primer synthesis. May also play a role in DNA repair. The polypeptide is DNA primase small subunit PriS (Hyperthermus butylicus (strain DSM 5456 / JCM 9403 / PLM1-5)).